Here is a 265-residue protein sequence, read N- to C-terminus: 5'-nucleotidase SurE (265 aa).

Asp11, Asp12, Ser43, and Asn101 together coordinate a divalent metal cation.

It belongs to the SurE nucleotidase family. The cofactor is a divalent metal cation.

It is found in the cytoplasm. It catalyses the reaction a ribonucleoside 5'-phosphate + H2O = a ribonucleoside + phosphate. Its function is as follows. Nucleotidase that shows phosphatase activity on nucleoside 5'-monophosphates. This Synechococcus sp. (strain CC9311) protein is 5'-nucleotidase SurE.